A 477-amino-acid chain; its full sequence is Secreted RxLR effector protein 102 (477 aa).

An N-terminal signal peptide occupies residues 1–20 (MRGGYYVLTALFVVASSEIA). Positions 48–65 (RFLRESRGVHGNVANEER) match the RxLR-dEER motif. Disordered regions lie at residues 326–345 (SKGQIPYPSEPLNAASTSKG), 351–370 (IKRSKRTSDGNTDIASLPSI), 376–401 (SSKSVMPLLTESTTSGDHSVPAKRSR), and 433–455 (PRSAVDPYTQSKKHSTKALAPSS).

The protein belongs to the RxLR effector family.

Its subcellular location is the secreted. It localises to the host nucleus. Functionally, secreted effector that acts as an elicitor that induces cell death in host plant cells. This chain is Secreted RxLR effector protein 102, found in Plasmopara viticola (Downy mildew of grapevine).